Reading from the N-terminus, the 160-residue chain is Putative 4-hydroxy-4-methyl-2-oxoglutarate aldolase (160 aa).

Residues 75-78 and R97 contribute to the substrate site; that span reads GDQL. Residue D98 participates in a divalent metal cation binding.

Belongs to the class II aldolase/RraA-like family. As to quaternary structure, homotrimer. The cofactor is a divalent metal cation.

It catalyses the reaction 4-hydroxy-4-methyl-2-oxoglutarate = 2 pyruvate. It carries out the reaction oxaloacetate + H(+) = pyruvate + CO2. Catalyzes the aldol cleavage of 4-hydroxy-4-methyl-2-oxoglutarate (HMG) into 2 molecules of pyruvate. Also contains a secondary oxaloacetate (OAA) decarboxylase activity due to the common pyruvate enolate transition state formed following C-C bond cleavage in the retro-aldol and decarboxylation reactions. The sequence is that of Putative 4-hydroxy-4-methyl-2-oxoglutarate aldolase from Vibrio parahaemolyticus serotype O3:K6 (strain RIMD 2210633).